The following is a 466-amino-acid chain: Soluble pyridine nucleotide transhydrogenase (466 aa).

36–45 (ERYQNVGGGC) contacts FAD.

The protein belongs to the class-I pyridine nucleotide-disulfide oxidoreductase family. In terms of assembly, homooligomer; probable homooctamer. It depends on FAD as a cofactor.

It localises to the cytoplasm. The enzyme catalyses NAD(+) + NADPH = NADH + NADP(+). Its function is as follows. Conversion of NADPH, generated by peripheral catabolic pathways, to NADH, which can enter the respiratory chain for energy generation. This is Soluble pyridine nucleotide transhydrogenase from Escherichia coli O157:H7.